The primary structure comprises 159 residues: Ribosomal RNA large subunit methyltransferase H (159 aa).

S-adenosyl-L-methionine-binding positions include Leu-76, Gly-108, and 127–132; that span reads FSKMTF.

The protein belongs to the RNA methyltransferase RlmH family. In terms of assembly, homodimer.

It localises to the cytoplasm. It carries out the reaction pseudouridine(1915) in 23S rRNA + S-adenosyl-L-methionine = N(3)-methylpseudouridine(1915) in 23S rRNA + S-adenosyl-L-homocysteine + H(+). Its function is as follows. Specifically methylates the pseudouridine at position 1915 (m3Psi1915) in 23S rRNA. This chain is Ribosomal RNA large subunit methyltransferase H, found in Bacillus velezensis (strain DSM 23117 / BGSC 10A6 / LMG 26770 / FZB42) (Bacillus amyloliquefaciens subsp. plantarum).